Here is a 340-residue protein sequence, read N- to C-terminus: MKEVVKLVLLGERQNSLNLSLYFNKYPPTIIYPEVLEDRNKKLASPSGSQRKISLLVLNQGVLQFNKIKETIEKSLPIETKVKLPQKAYELYKKYYQDYTDMLNSLHAITGKFKTQSRLVVGLGDESVYETSIRLLRNYGVPYIPGSAIKGVTRHLTYYVLAEFINEGNDFYKRAKTVQDAFMKGDPKEILSNAKVPERCSRLCKEFLRIFGEKKVPEIIDELIRIFGTQKKEGEVVFFDAIPIAEEIADKPILELDIMNPHYGPYYQSGEKNVPPPGDWYDPIPIFFLTVPKDVPFLVAVGGRDRELTEKAFSLVKLALRDLGVGAKTSLGYGRLVEYV.

Belongs to the CRISPR system Cmr6 family. Part of the type III-B Cmr ribonucleoprotein (RNP) complex, an elongated RNP with Cmr2 and Cmr3 as the base, with Cmr4 and Cmr5 forming a helical core along the mature crRNA (39 or 45 nt in length), while the complex is capped by Cmr6 and Cmr1. The 5' end of the crRNA is bound to Cmr2 and Cmr3, while Cmr6 and a Cmr1 subunit (Cmr1-1 or Cmr1-2) cap the 3' end of the crRNA. The target RNA lies antiparallel to the crRNA, with its 5' end near Cmr1 and Cmr6 and its 3' end near Cmr2 and Cmr3; major target cleavage occurs nears the junction of Cmr1/Cmr6 and Cmr4/Cmr, with minor cleavage occurring at 6 nt intervals which coincide with the proposed spacing of Cmr4 subunits. Interacts with Cmr4 and Cmr5.

It is found in the cytoplasm. CRISPR (clustered regularly interspaced short palindromic repeat), is an adaptive immune system that provides protection against mobile genetic elements (viruses, transposable elements and conjugative plasmids). CRISPR clusters contain sequences complementary to antecedent mobile elements and target invading nucleic acids. CRISPR clusters are transcribed and processed into CRISPR RNA (crRNA), formerly called psiRNA (prokaryotic silencing) in this organism. Part of the Cmr ribonucleoprotein complex which has divalent cation-dependent endoribonuclease activity specific for ssRNA complementary to the crRNA (target RNA), generating 5' hydroxy- and 3' phosphate or 2'-3' cyclic phosphate termini. Cmr4 is probably the subunit that cleaves target RNA. Cmr complex does not cleave ssDNA complementary to the crRNA. Cleavage of invading RNA is guided by the crRNA; substrate cleavage occurs a fixed distance (14 nt) from the 3' end of the crRNA. In vitro reconstitution shows Cmr1-2 and Cmr5 are not absolutely necessary for target cleavage. The chain is CRISPR system Cmr subunit Cmr6 from Pyrococcus furiosus (strain ATCC 43587 / DSM 3638 / JCM 8422 / Vc1).